A 108-amino-acid polypeptide reads, in one-letter code: Small ribosomal subunit protein mS33 (108 aa).

Residues 84–108 form a disordered region; that stretch reads LRARDKGAPKKKRTAPSAADAKKKK.

It belongs to the mitochondrion-specific ribosomal protein mS33 family. As to quaternary structure, component of the mitochondrial small ribosomal subunit (mt-SSU). Mature N.crassa 74S mitochondrial ribosomes consist of a small (37S) and a large (54S) subunit. The 37S small subunit contains a 16S ribosomal RNA (16S mt-rRNA) and 32 different proteins. The 54S large subunit contains a 23S rRNA (23S mt-rRNA) and 42 different proteins.

It localises to the mitochondrion. In terms of biological role, component of the mitochondrial ribosome (mitoribosome), a dedicated translation machinery responsible for the synthesis of mitochondrial genome-encoded proteins, including at least some of the essential transmembrane subunits of the mitochondrial respiratory chain. The mitoribosomes are attached to the mitochondrial inner membrane and translation products are cotranslationally integrated into the membrane. This Neurospora crassa (strain ATCC 24698 / 74-OR23-1A / CBS 708.71 / DSM 1257 / FGSC 987) protein is Small ribosomal subunit protein mS33 (rsm27).